A 587-amino-acid polypeptide reads, in one-letter code: 2-succinyl-5-enolpyruvyl-6-hydroxy-3-cyclohexene-1-carboxylate synthase (587 aa).

Belongs to the TPP enzyme family. MenD subfamily. In terms of assembly, homodimer. Mg(2+) serves as cofactor. Requires Mn(2+) as cofactor. It depends on thiamine diphosphate as a cofactor.

It carries out the reaction isochorismate + 2-oxoglutarate + H(+) = 5-enolpyruvoyl-6-hydroxy-2-succinyl-cyclohex-3-ene-1-carboxylate + CO2. Its pathway is quinol/quinone metabolism; 1,4-dihydroxy-2-naphthoate biosynthesis; 1,4-dihydroxy-2-naphthoate from chorismate: step 2/7. The protein operates within cofactor biosynthesis; phylloquinone biosynthesis. Functionally, catalyzes the thiamine diphosphate-dependent decarboxylation of 2-oxoglutarate and the subsequent addition of the resulting succinic semialdehyde-thiamine pyrophosphate anion to isochorismate to yield 2-succinyl-5-enolpyruvyl-6-hydroxy-3-cyclohexene-1-carboxylate (SEPHCHC). The chain is 2-succinyl-5-enolpyruvyl-6-hydroxy-3-cyclohexene-1-carboxylate synthase from Prochlorococcus marinus (strain MIT 9215).